Reading from the N-terminus, the 193-residue chain is MSLENLQLDIKVFGKWDTKVEIRDPSLKKYISLMPVYLPHTGGRHEHRRFGKAKVPIVERLINQIMRPGRNKGKKHLAYNIVKLAFDIIYLKTGQNPIQVLVRAIENSAPREEVTRIMYGGIVYYVAVDVSPQRRIDLALRHIATGAKDASFNNPKPIEEVLAEEIIAAANNDSKSFAIKRKEEIERIALSSR.

Belongs to the universal ribosomal protein uS7 family. Part of the 30S ribosomal subunit.

One of the primary rRNA binding proteins, it binds directly to 16S rRNA where it nucleates assembly of the head domain of the 30S subunit. Is located at the subunit interface close to the decoding center. The protein is Small ribosomal subunit protein uS7 of Saccharolobus solfataricus (strain ATCC 35092 / DSM 1617 / JCM 11322 / P2) (Sulfolobus solfataricus).